The sequence spans 375 residues: Succinyl-diaminopimelate desuccinylase (375 aa).

Position 66 (H66) interacts with Zn(2+). The active site involves D68. Zn(2+) is bound at residue D99. The active-site Proton acceptor is the E133. Residues E134, E162, and H348 each contribute to the Zn(2+) site.

The protein belongs to the peptidase M20A family. DapE subfamily. As to quaternary structure, homodimer. Zn(2+) serves as cofactor. Requires Co(2+) as cofactor.

It carries out the reaction N-succinyl-(2S,6S)-2,6-diaminopimelate + H2O = (2S,6S)-2,6-diaminopimelate + succinate. It participates in amino-acid biosynthesis; L-lysine biosynthesis via DAP pathway; LL-2,6-diaminopimelate from (S)-tetrahydrodipicolinate (succinylase route): step 3/3. Catalyzes the hydrolysis of N-succinyl-L,L-diaminopimelic acid (SDAP), forming succinate and LL-2,6-diaminopimelate (DAP), an intermediate involved in the bacterial biosynthesis of lysine and meso-diaminopimelic acid, an essential component of bacterial cell walls. The protein is Succinyl-diaminopimelate desuccinylase of Yersinia pestis bv. Antiqua (strain Antiqua).